We begin with the raw amino-acid sequence, 613 residues long: Na(+)/H(+) antiporter NhaA 1 (613 aa).

The tract at residues 1 to 23 (MTEASARTIGPLPSRFSRDPKTP) is disordered. The interval 1 to 408 (MTEASARTIG…DPARQDEARV (408 aa)) is na(+)/H(+) antiporter NhaA. 11 helical membrane-spanning segments follow: residues 29-49 (AAAA…NSPW), 81-101 (GLMA…FVIG), 110-130 (AVPV…FLTF), 138-158 (QAWG…LAVI), 168-188 (IFLL…IALF), 191-211 (DDLK…LAMV), 231-251 (IALY…AVLI), 300-320 (AVGP…NAGV), 337-357 (WGIV…ATAL), 377-397 (GGAA…DVAI), and 408-428 (VGVL…FRIT). Residues 409–613 (GVLIASVLAF…SLIRALEAGR (205 aa)) enclose the Thioredoxin domain.

This sequence in the N-terminal section; belongs to the NhaA Na(+)/H(+) (TC 2.A.33) antiporter family.

Its subcellular location is the cell membrane. It carries out the reaction Na(+)(in) + 2 H(+)(out) = Na(+)(out) + 2 H(+)(in). Its function is as follows. Na(+)/H(+) antiporter that extrudes sodium in exchange for external protons. The chain is Na(+)/H(+) antiporter NhaA 1 from Mycobacterium sp. (strain KMS).